We begin with the raw amino-acid sequence, 118 residues long: Large ribosomal subunit protein bL19 (118 aa).

The protein belongs to the bacterial ribosomal protein bL19 family.

This protein is located at the 30S-50S ribosomal subunit interface and may play a role in the structure and function of the aminoacyl-tRNA binding site. This is Large ribosomal subunit protein bL19 from Campylobacter hominis (strain ATCC BAA-381 / DSM 21671 / CCUG 45161 / LMG 19568 / NCTC 13146 / CH001A).